A 693-amino-acid chain; its full sequence is Bacterial dynamin-like protein (693 aa).

Topologically, residues 1–521 are cytoplasmic; the sequence is MVNQVATDRF…DNSPGWAKWA (521 aa). Positions 66 to 313 constitute a Dynamin-type G domain; that stretch reads QQGVFRLLVL…QADLDGTGFP (248 aa). Residues 76-83 are G1 motif; it reads GDMKRGKS. GTP is bound at residue 79–84; sequence KRGKST. Residues 102–103 form a G2 motif region; the sequence is CT. The interval 180-183 is G3 motif; sequence DSPG. 235 to 241 is a binding site for GTP; it reads FLVNAWD. The tract at residues 238–241 is G4 motif; that stretch reads NAWD. Position 268 (asparagine 268) is a region of interest, G5 motif. 292 to 293 is a GTP binding site; sequence SI. Positions 311 to 571 are middle domain; the sequence is GFPKFMDSLN…TAVTGILLGP (261 aa). Residues 347–378 are a coiled coil; the sequence is REAVARRIPLLEQDVNELKKRIDSVEPEFNKL. The stretch at 522-574 is an intramembrane region; that stretch reads MGLLSLSKGNLAGFALAGAGFDWKNILLNYFTVIGIGGIITAVTGILLGPIGF. The tract at residues 572–606 is paddle domain; sequence IGFALLGLGVGFLQADQARRELVKTAKKELVKHLP. Residues 575-693 lie on the Cytoplasmic side of the membrane; that stretch reads ALLGLGVGFL…AYSNLLAYYS (119 aa). Residues 607 to 693 are GED; that stretch reads QVAHEQSQVV…AYSNLLAYYS (87 aa). Positions 661–688 form a coiled coil; it reads ESEFNRLKNLQEDVIAQLQKIEAAYSNL.

This sequence belongs to the TRAFAC class dynamin-like GTPase superfamily. Dynamin/Fzo/YdjA family. Mitofusin subfamily. In terms of assembly, homodimer. Self-assembles in the presence of GMP-PNP and liposomes, and probably also in the presence of GTP.

It localises to the cell inner membrane. The catalysed reaction is GTP + H2O = GDP + phosphate + H(+). In terms of biological role, dynamin-related GTPase probably involved in membrane remodeling. Lipid and nucleotide-binding are thought to induce a large intramolecular rearrangement, leading to assembly on lipid bilayers and possible membrane curving. In the presence of the non-hydrolyzable GTP analog GMP-PNP self-assembles on a lipid bilayer; this does not stimulate subsequent GTPase activity. Does not bind lipids in the presence of GDP; perhaps GTP hydrolysis disrupts membrane-binding. This is Bacterial dynamin-like protein from Nostoc punctiforme (strain ATCC 29133 / PCC 73102).